The primary structure comprises 149 residues: MSDNNQALKDAGLKVTLPRLKILEVLQQPECQHISAEELYKKLIDLGEEIGLATVYRVLNQFDDAGIVTRHHFEGGKSVFELSTQHHHDHLVCLDCGEVIEFSDEVIEQRQREIAEQYNVQLTNHSLYLYGKCADGSCKQNPNAHKSKR.

The DNA-binding stretch occupies residues Met-1–Thr-84. Residues His-33 and Glu-81 each coordinate Zn(2+). Positions Gln-85–Pro-142 are dimerization. Fe cation-binding residues include His-87 and Asp-89. Zn(2+) is bound by residues His-90, Cys-93, Cys-96, and Glu-101. Residues Glu-108 and His-125 each contribute to the Fe cation site.

Belongs to the Fur family. As to quaternary structure, homodimer.

The protein localises to the cytoplasm. Functionally, fur acts as a repressor, employing Fe(2+) as a cofactor to bind the operator of the iron transport operon. It plays a role in the regulation of expression of the outer membrane protein fatA and synthesis of catechols which are intermediates in the biosynthesis of anguibactin. The polypeptide is Ferric uptake regulation protein (fur) (Vibrio anguillarum (strain ATCC 68554 / 775) (Listonella anguillarum)).